A 293-amino-acid chain; its full sequence is Nucleotide-binding protein DvMF_0424 (293 aa).

13 to 20 provides a ligand contact to ATP; it reads GLSGAGKS. 65 to 68 serves as a coordination point for GTP; that stretch reads DLRE.

Belongs to the RapZ-like family.

Functionally, displays ATPase and GTPase activities. The sequence is that of Nucleotide-binding protein DvMF_0424 from Nitratidesulfovibrio vulgaris (strain DSM 19637 / Miyazaki F) (Desulfovibrio vulgaris).